A 183-amino-acid polypeptide reads, in one-letter code: ATP synthase subunit b, chloroplastic (183 aa).

The helical transmembrane segment at 27-49 (LATNPINLSVVLGVLIFFGKGVL) threads the bilayer.

The protein belongs to the ATPase B chain family. As to quaternary structure, F-type ATPases have 2 components, F(1) - the catalytic core - and F(0) - the membrane proton channel. F(1) has five subunits: alpha(3), beta(3), gamma(1), delta(1), epsilon(1). F(0) has four main subunits: a(1), b(1), b'(1) and c(10-14). The alpha and beta chains form an alternating ring which encloses part of the gamma chain. F(1) is attached to F(0) by a central stalk formed by the gamma and epsilon chains, while a peripheral stalk is formed by the delta, b and b' chains.

The protein localises to the plastid. It is found in the chloroplast thylakoid membrane. F(1)F(0) ATP synthase produces ATP from ADP in the presence of a proton or sodium gradient. F-type ATPases consist of two structural domains, F(1) containing the extramembraneous catalytic core and F(0) containing the membrane proton channel, linked together by a central stalk and a peripheral stalk. During catalysis, ATP synthesis in the catalytic domain of F(1) is coupled via a rotary mechanism of the central stalk subunits to proton translocation. In terms of biological role, component of the F(0) channel, it forms part of the peripheral stalk, linking F(1) to F(0). This is ATP synthase subunit b, chloroplastic from Ranunculus macranthus (Large buttercup).